The following is a 1088-amino-acid chain: RNA-directed RNA polymerase (1088 aa).

Residues leucine 501–isoleucine 687 form the RdRp catalytic domain.

The protein belongs to the reoviridae RNA-directed RNA polymerase family. As to quaternary structure, interacts with VP3 (Potential). Interacts with VP2; this interaction activates VP1. Interacts with NSP5; this interaction is probably necessary for the formation of functional virus factories. Interacts with NSP2; this interaction is weak. Mg(2+) serves as cofactor.

The protein localises to the virion. The catalysed reaction is RNA(n) + a ribonucleoside 5'-triphosphate = RNA(n+1) + diphosphate. In terms of biological role, RNA-directed RNA polymerase that is involved in both transcription and genome replication. Together with VP3 capping enzyme, forms an enzyme complex positioned near the channels situated at each of the five-fold vertices of the core. Following infection, the outermost layer of the virus is lost, leaving a double-layered particle (DLP) made up of the core and VP6 shell. VP1 then catalyzes the transcription of fully conservative plus-strand genomic RNAs that are extruded through the DLP's channels into the cytoplasm where they function as mRNAs for translation of viral proteins. One copy of each of the viral (+)RNAs is also recruited during core assembly, together with newly synthesized polymerase complexes and VP2. The polymerase of these novo-formed particles catalyzes the synthesis of complementary minus-strands leading to dsRNA formation. To do so, the polymerase specifically recognizes and binds 4 bases 5'-UGUG-3' in the conserved 3'-sequence of plus-strand RNA templates. VP2 presumably activates the autoinhibited VP1-RNA complex to coordinate packaging and genome replication. Once dsRNA synthesis is complete, the polymerase switches to the transcriptional mode, thus providing secondary transcription. The polypeptide is RNA-directed RNA polymerase (Homo sapiens (Human)).